Reading from the N-terminus, the 53-residue chain is Tryptophan RNA-binding attenuator protein inhibitory protein (53 aa).

2 CXXCXGXG motif repeats span residues 12-19 and 26-33; these read CPKCERAG and CPACSGKG.

In terms of assembly, homopentamer or homohexamer.

The protein resides in the cytoplasm. By forming a complex with tryptophan-activated TRAP, and masking its RNA binding site, it inhibits TRAP's RNA binding ability, thereby abolishing TRAP regulation of gene expression, leading to antitermination and increased trp operon expression. AT acts by competing with messenger RNA for the RNA binding domain of TRAP. In Bacillus subtilis (strain 168), this protein is Tryptophan RNA-binding attenuator protein inhibitory protein (rtpA).